Reading from the N-terminus, the 118-residue chain is Protein Rev (118 aa).

The residue at position 5 (serine 5) is a Phosphoserine; by host CK2. The homomultimerization stretch occupies residues 18–26 (LIKILYQSN). Residues 23 to 49 (YQSNPPPSPEGTRQARRNRRRRWRARQ) form a disordered region. The Nuclear localization signal and RNA-binding (RRE) motif lies at 34-50 (TRQARRNRRRRWRARQR). Residues 36-49 (QARRNRRRRWRARQ) are compositionally biased toward basic residues. Positions 73 to 84 (LQLPPLERLNLN) match the Nuclear export signal and binding to XPO1 motif. Residues 89–118 (CGASGTQGVGSPQISVESPTVLESGTEEQC) form a disordered region. 2 positions are modified to phosphoserine; by host: serine 92 and serine 99. The segment covering 92–112 (SGTQGVGSPQISVESPTVLES) has biased composition (polar residues).

Belongs to the HIV-1 REV protein family. In terms of assembly, homomultimer; when bound to the RRE. Multimeric assembly is essential for activity and may involve XPO1. Binds to human KPNB1, XPO1, TNPO1, RANBP5 and IPO7. Interacts with the viral Integrase. Interacts with human KHDRBS1. Interacts with human NAP1; this interaction decreases Rev multimerization and stimulates its activity. Interacts with human DEAD-box helicases DDX3 and DDX24; these interactions may serve for viral RNA export to the cytoplasm and packaging, respectively. Interacts with human PSIP1; this interaction may inhibit HIV-1 DNA integration by promoting dissociation of the Integrase-LEDGF/p75 complex. Asymmetrically arginine dimethylated at one site by host PRMT6. Methylation impairs the RNA-binding activity and export of viral RNA from the nucleus to the cytoplasm. Post-translationally, phosphorylated by protein kinase CK2. Presence of, and maybe binding to the N-terminus of the regulatory beta subunit of CK2 is necessary for CK2-mediated Rev's phosphorylation.

Its subcellular location is the host nucleus. The protein resides in the host nucleolus. The protein localises to the host cytoplasm. In terms of biological role, escorts unspliced or incompletely spliced viral pre-mRNAs (late transcripts) out of the nucleus of infected cells. These pre-mRNAs carry a recognition sequence called Rev responsive element (RRE) located in the env gene, that is not present in fully spliced viral mRNAs (early transcripts). This function is essential since most viral proteins are translated from unspliced or partially spliced pre-mRNAs which cannot exit the nucleus by the pathway used by fully processed cellular mRNAs. Rev itself is translated from a fully spliced mRNA that readily exits the nucleus. Rev's nuclear localization signal (NLS) binds directly to KPNB1/Importin beta-1 without previous binding to KPNA1/Importin alpha-1. KPNB1 binds to the GDP bound form of RAN (Ran-GDP) and targets Rev to the nucleus. In the nucleus, the conversion from Ran-GDP to Ran-GTP dissociates Rev from KPNB1 and allows Rev's binding to the RRE in viral pre-mRNAs. Rev multimerization on the RRE via cooperative assembly exposes its nuclear export signal (NES) to the surface. Rev can then form a complex with XPO1/CRM1 and Ran-GTP, leading to nuclear export of the complex. Conversion from Ran-GTP to Ran-GDP mediates dissociation of the Rev/RRE/XPO1/RAN complex, so that Rev can return to the nucleus for a subsequent round of export. Beside KPNB1, also seems to interact with TNPO1/Transportin-1, RANBP5/IPO5 and IPO7/RANBP7 for nuclear import. The nucleoporin-like HRB/RIP is an essential cofactor that probably indirectly interacts with Rev to release HIV RNAs from the perinuclear region to the cytoplasm. In Human immunodeficiency virus type 1 group M subtype D (isolate Z2/CDC-Z34) (HIV-1), this protein is Protein Rev.